The primary structure comprises 199 residues: Outer dense fiber protein 4 (199 aa).

Residues 1–14 show a composition bias toward basic and acidic residues; sequence MNIRSLERAGRAGK. Residues 1–25 are disordered; sequence MNIRSLERAGRAGKQDGVAVSPGQE. Phosphoserine is present on Ser-53. 3 helical membrane passes run 68–88, 109–128, and 159–179; these read IAQV…VVMV, VTTK…LHIY, and LALG…IPGL.

It localises to the membrane. Functionally, component of the outer dense fibers (ODF) of spermatozoa which could be involved in sperm tail structure, sperm movement and general organization of cellular cytoskeleton. This is Outer dense fiber protein 4 (ODF4) from Bos taurus (Bovine).